The sequence spans 137 residues: Partner of bursicon (137 aa).

Positions 1 to 24 are cleaved as a signal peptide; it reads MNIMITKIFFLVQLFYIVVSKSSA. 5 disulfide bridges follow: Cys-28/Cys-86, Cys-52/Cys-101, Cys-61/Cys-127, Cys-65/Cys-129, and Cys-83/Cys-132. Positions 28–123 constitute a CTCK domain; it reads CETVASEVHV…NALMEVRLRE (96 aa).

In terms of assembly, heterodimer of burs and pburs.

Its subcellular location is the secreted. Final heterodimeric neurohormone released at the end of the molting cycle, involved in the sclerotization (tanning) of the insect cuticle, melanization and wing spreading. This chain is Partner of bursicon, found in Bombyx mori (Silk moth).